The chain runs to 552 residues: 2,3-bisphosphoglycerate-independent phosphoglycerate mutase (552 aa).

The span at 1–25 (MTNTQQQSESIDDNQAQLSKQQNSD) shows a compositional bias: polar residues. A disordered region spans residues 1–30 (MTNTQQQSESIDDNQAQLSKQQNSDNNKKV). Asp-38 and Ser-88 together coordinate Mn(2+). Ser-88 serves as the catalytic Phosphoserine intermediate. Substrate contacts are provided by residues His-149, 179–180 (RD), Arg-217, Arg-223, 293–296 (RADR), and Lys-373. Mn(2+) is bound by residues Asp-440, His-444, Asp-481, His-482, and His-500.

It belongs to the BPG-independent phosphoglycerate mutase family. As to quaternary structure, monomer. Mn(2+) serves as cofactor.

It carries out the reaction (2R)-2-phosphoglycerate = (2R)-3-phosphoglycerate. It participates in carbohydrate degradation; glycolysis; pyruvate from D-glyceraldehyde 3-phosphate: step 3/5. Its function is as follows. Catalyzes the interconversion of 2-phosphoglycerate and 3-phosphoglycerate. The protein is 2,3-bisphosphoglycerate-independent phosphoglycerate mutase of Psychrobacter arcticus (strain DSM 17307 / VKM B-2377 / 273-4).